The primary structure comprises 149 residues: MRAVVQRVTSSSVKVEDNIVGSIGKGLNVLIGISKSDTLEDLKYIRDKVINLRIFQDEKEKMNLSLLDIKGELLVISQFTLYGDCRKGRRPNFMDAKGGEEAKELYEEFLSLLKESNLKVETGEFGADMKVEINNDGPVTIILDSSKNF.

The Gly-cisPro motif, important for rejection of L-amino acids motif lies at 137–138 (GP).

Belongs to the DTD family. In terms of assembly, homodimer.

It is found in the cytoplasm. It carries out the reaction glycyl-tRNA(Ala) + H2O = tRNA(Ala) + glycine + H(+). The catalysed reaction is a D-aminoacyl-tRNA + H2O = a tRNA + a D-alpha-amino acid + H(+). Functionally, an aminoacyl-tRNA editing enzyme that deacylates mischarged D-aminoacyl-tRNAs. Also deacylates mischarged glycyl-tRNA(Ala), protecting cells against glycine mischarging by AlaRS. Acts via tRNA-based rather than protein-based catalysis; rejects L-amino acids rather than detecting D-amino acids in the active site. By recycling D-aminoacyl-tRNA to D-amino acids and free tRNA molecules, this enzyme counteracts the toxicity associated with the formation of D-aminoacyl-tRNA entities in vivo and helps enforce protein L-homochirality. The polypeptide is D-aminoacyl-tRNA deacylase (Clostridium botulinum (strain Alaska E43 / Type E3)).